Reading from the N-terminus, the 108-residue chain is Nucleoid-associated protein Rmet_2128 (108 aa).

Over residues 86–96 (TTQEKMGSMTS) the composition is skewed to polar residues. The interval 86–108 (TTQEKMGSMTSGLPLPPGFKLPF) is disordered. A compositionally biased stretch (pro residues) spans 99–108 (PLPPGFKLPF).

Belongs to the YbaB/EbfC family. As to quaternary structure, homodimer.

The protein localises to the cytoplasm. It localises to the nucleoid. Its function is as follows. Binds to DNA and alters its conformation. May be involved in regulation of gene expression, nucleoid organization and DNA protection. This chain is Nucleoid-associated protein Rmet_2128, found in Cupriavidus metallidurans (strain ATCC 43123 / DSM 2839 / NBRC 102507 / CH34) (Ralstonia metallidurans).